Here is a 144-residue protein sequence, read N- to C-terminus: MAFSSLLSRSSYIPMDFIIARCRARSTKQKTYAPVCQASTTISSRCSLVGMMQRSPSRSSASSINTMYSAIIPHSVVINLKHANSRSRSSSAVLRASPVCGLTISSTDRIARCTLTCVARSGQMYQISSMPFARRLNRYPDTTS.

The protein is Protein D (D) of Escherichia coli.